The sequence spans 209 residues: Ion-translocating oxidoreductase complex subunit G (209 aa).

The chain crosses the membrane as a helical span at residues 9–29 (GITLAIFAALTTGLTAVVNSL). Threonine 175 is subject to FMN phosphoryl threonine.

Belongs to the RnfG family. The complex is composed of six subunits: RnfA, RnfB, RnfC, RnfD, RnfE and RnfG. Requires FMN as cofactor.

The protein resides in the cell inner membrane. In terms of biological role, part of a membrane-bound complex that couples electron transfer with translocation of ions across the membrane. The chain is Ion-translocating oxidoreductase complex subunit G from Photorhabdus laumondii subsp. laumondii (strain DSM 15139 / CIP 105565 / TT01) (Photorhabdus luminescens subsp. laumondii).